Here is a 504-residue protein sequence, read N- to C-terminus: Catalase (504 aa).

The tract at residues 1–25 (MSKQDGKLTGLFGAPVSDRENSMTA) is disordered. Catalysis depends on residues H56 and N129. Y339 contributes to the heme binding site.

It belongs to the catalase family. In terms of assembly, homodimer. It depends on heme as a cofactor.

The catalysed reaction is 2 H2O2 = O2 + 2 H2O. In terms of biological role, decomposes hydrogen peroxide into water and oxygen; serves to protect cells from the toxic effects of hydrogen peroxide. This chain is Catalase (katA), found in Staphylococcus epidermidis (strain ATCC 35984 / DSM 28319 / BCRC 17069 / CCUG 31568 / BM 3577 / RP62A).